The primary structure comprises 334 residues: Beta-glucanase (334 aa).

A signal peptide spans 1 to 27 (MKNRVISLLMASLLLVLSVIVAPFYKA). The region spanning 28–248 (EAATVVNTPF…YVKYYPNGVP (221 aa)) is the GH16 domain. Residue Glu-136 is the Nucleophile of the active site. Residue Glu-140 is the Proton donor of the active site. The segment at 246 to 265 (GVPQDNPTPTPTIAPSTPTN) is disordered. Residues 267-334 (NLPLKGDVNG…RYLIRAIPSL (68 aa)) enclose the Dockerin domain.

Belongs to the glycosyl hydrolase 16 family.

It catalyses the reaction Hydrolysis of (1-&gt;4)-beta-D-glucosidic linkages in beta-D-glucans containing (1-&gt;3)- and (1-&gt;4)-bonds.. This chain is Beta-glucanase (licB), found in Acetivibrio thermocellus (Hungateiclostridium thermocellum).